The primary structure comprises 121 residues: Basic phospholipase A2 homolog (121 aa).

7 disulfide bridges follow: Cys26–Cys115, Cys28–Cys44, Cys43–Cys95, Cys49–Cys121, Cys50–Cys88, Cys57–Cys81, and Cys75–Cys86.

Belongs to the phospholipase A2 family. Group II subfamily. K49 sub-subfamily. Homodimer. In terms of tissue distribution, expressed by the venom gland.

The protein resides in the secreted. Its function is as follows. Snake venom phospholipase A2 homolog that lacks enzymatic activity, but has myotoxic and cytolytic activities. This chain is Basic phospholipase A2 homolog, found in Metlapilcoatlus nummifer (Mexican jumping pitviper).